Here is a 544-residue protein sequence, read N- to C-terminus: Chaperonin GroEL (544 aa).

Residues 29 to 32 (TLGP), K50, 86 to 90 (DGTTT), G413, 479 to 481 (DAA), and D495 contribute to the ATP site.

Belongs to the chaperonin (HSP60) family. As to quaternary structure, forms a cylinder of 14 subunits composed of two heptameric rings stacked back-to-back. Interacts with the co-chaperonin GroES.

It is found in the cytoplasm. It catalyses the reaction ATP + H2O + a folded polypeptide = ADP + phosphate + an unfolded polypeptide.. Its function is as follows. Together with its co-chaperonin GroES, plays an essential role in assisting protein folding. The GroEL-GroES system forms a nano-cage that allows encapsulation of the non-native substrate proteins and provides a physical environment optimized to promote and accelerate protein folding. This Borrelia duttonii (strain Ly) protein is Chaperonin GroEL.